A 430-amino-acid polypeptide reads, in one-letter code: Probable FAD-dependent monooxygenase (430 aa).

Residues 1-23 (MGSTSTPPHVLIIGAGITGLALA) form the signal peptide. Residue 9-37 (HVLIIGAGITGLALAQALRKHGVSFAVYE) coordinates FAD. 2 N-linked (GlcNAc...) asparagine glycosylation sites follow: Asn130 and Asn151. 307–330 (LEDWPTPPKGSWSNLGGTATLVGD) contacts FAD.

FAD serves as cofactor.

In Arthroderma benhamiae (strain ATCC MYA-4681 / CBS 112371) (Trichophyton mentagrophytes), this protein is Probable FAD-dependent monooxygenase.